The following is a 140-amino-acid chain: MLEIDNQTPLESDFLLLEKIANVLAPTQIIELVLVSDETIREINKDLRGCDYATDVLSFPLEAIPHTPLGSVVINAPLAQTNALKLGHSLENEIALLFIHGVLHLLGYDHEKDKGEQRQKESELIKAFNLPLSLIERTQD.

Residues histidine 100, histidine 104, and histidine 110 each contribute to the Zn(2+) site.

Belongs to the endoribonuclease YbeY family. The cofactor is Zn(2+).

It localises to the cytoplasm. In terms of biological role, single strand-specific metallo-endoribonuclease involved in late-stage 70S ribosome quality control and in maturation of the 3' terminus of the 16S rRNA. The protein is Endoribonuclease YbeY of Helicobacter pylori (strain ATCC 700392 / 26695) (Campylobacter pylori).